Consider the following 485-residue polypeptide: UDP-N-acetylmuramate--L-alanine ligase (485 aa).

120–126 (GSHGKTT) contributes to the ATP binding site.

Belongs to the MurCDEF family.

It is found in the cytoplasm. It catalyses the reaction UDP-N-acetyl-alpha-D-muramate + L-alanine + ATP = UDP-N-acetyl-alpha-D-muramoyl-L-alanine + ADP + phosphate + H(+). Its pathway is cell wall biogenesis; peptidoglycan biosynthesis. Cell wall formation. The chain is UDP-N-acetylmuramate--L-alanine ligase from Rickettsia rickettsii (strain Iowa).